A 251-amino-acid chain; its full sequence is Probable transcriptional regulatory protein cgR_1708 (251 aa).

The disordered stretch occupies residues 1–22 (MAGHSKWATTKHKKAANDAKRG).

It belongs to the TACO1 family.

The protein localises to the cytoplasm. In Corynebacterium glutamicum (strain R), this protein is Probable transcriptional regulatory protein cgR_1708.